The primary structure comprises 421 residues: Gamma-glutamyl phosphate reductase (421 aa).

The protein belongs to the gamma-glutamyl phosphate reductase family.

The protein localises to the cytoplasm. The catalysed reaction is L-glutamate 5-semialdehyde + phosphate + NADP(+) = L-glutamyl 5-phosphate + NADPH + H(+). The protein operates within amino-acid biosynthesis; L-proline biosynthesis; L-glutamate 5-semialdehyde from L-glutamate: step 2/2. Catalyzes the NADPH-dependent reduction of L-glutamate 5-phosphate into L-glutamate 5-semialdehyde and phosphate. The product spontaneously undergoes cyclization to form 1-pyrroline-5-carboxylate. This Acinetobacter baumannii (strain AYE) protein is Gamma-glutamyl phosphate reductase.